The sequence spans 244 residues: Phosphoadenosine 5'-phosphosulfate reductase (244 aa).

Cys239 serves as the catalytic Nucleophile; cysteine thiosulfonate intermediate.

It belongs to the PAPS reductase family. CysH subfamily.

It localises to the cytoplasm. The enzyme catalyses [thioredoxin]-disulfide + sulfite + adenosine 3',5'-bisphosphate + 2 H(+) = [thioredoxin]-dithiol + 3'-phosphoadenylyl sulfate. It functions in the pathway sulfur metabolism; hydrogen sulfide biosynthesis; sulfite from sulfate: step 3/3. In terms of biological role, catalyzes the formation of sulfite from phosphoadenosine 5'-phosphosulfate (PAPS) using thioredoxin as an electron donor. The protein is Phosphoadenosine 5'-phosphosulfate reductase of Escherichia coli O157:H7.